The primary structure comprises 589 residues: Sentrin-specific protease 2 (589 aa).

Residues 28–31 (KRRR) carry the Nuclear localization signal motif. Phosphoserine is present on Ser-32. Positions 46–51 (PAKRPR) match the Nuclear localization signal motif. Positions 71–382 (GFPFQLTTKP…EKEISNALGH (312 aa)) are axin-binding. Disordered regions lie at residues 148-179 (SFGFTLNSEGYNRRPGGRRHSKGNPESSLMWK) and 191-210 (EESGKGLRRPHRTVEEGVQK). The short motif at 317–332 (LEPDLSEEVSARLRLG) is the Nuclear export signal element. A phosphoserine mark is found at Ser-333 and Ser-344. Positions 395–559 (LRITRGDIQT…MFTCKYADYI (165 aa)) are protease. Catalysis depends on residues His-478 and Asp-495. The Nucleophile role is filled by Cys-548.

The protein belongs to the peptidase C48 family. Binds to SUMO2 and SUMO3. Interacts with the C-terminal domain of NUP153 via its N-terminus. Interacts with MTA1. In terms of processing, polyubiquitinated; which leads to proteasomal degradation.

The protein resides in the nucleus. Its subcellular location is the nuclear pore complex. It is found in the nucleus membrane. It localises to the cytoplasm. Functionally, protease that catalyzes two essential functions in the SUMO pathway. The first is the hydrolysis of an alpha-linked peptide bond at the C-terminal end of the small ubiquitin-like modifier (SUMO) propeptides, SUMO1, SUMO2 and SUMO3 leading to the mature form of the proteins. The second is the deconjugation of SUMO1, SUMO2 and SUMO3 from targeted proteins, by cleaving an epsilon-linked peptide bond between the C-terminal glycine of the mature SUMO and the lysine epsilon-amino group of the target protein. May down-regulate CTNNB1 levels and thereby modulate the Wnt pathway. Deconjugates SUMO2 from MTA1. Plays a dynamic role in adipogenesis by desumoylating and promoting the stabilization of CEBPB. Acts as a regulator of the cGAS-STING pathway by catalyzing desumoylation of CGAS and STING1 during the late phase of viral infection. In Pongo abelii (Sumatran orangutan), this protein is Sentrin-specific protease 2 (SENP2).